The sequence spans 430 residues: Ribosomal protein uS12 methylthiotransferase RimO (430 aa).

In terms of domain architecture, MTTase N-terminal spans 2–119 (ISVYSISLGC…WPAMLAHALK (118 aa)). 6 residues coordinate [4Fe-4S] cluster: Cys-11, Cys-46, Cys-81, Cys-145, Cys-149, and Cys-152. The Radical SAM core domain maps to 131-361 (STGPSYAWLK…MEVQAEISEE (231 aa)). The TRAM domain maps to 364-430 (AVHEGTRQQV…TRTYDLVALV (67 aa)).

It belongs to the methylthiotransferase family. RimO subfamily. It depends on [4Fe-4S] cluster as a cofactor.

It localises to the cytoplasm. The catalysed reaction is L-aspartate(89)-[ribosomal protein uS12]-hydrogen + (sulfur carrier)-SH + AH2 + 2 S-adenosyl-L-methionine = 3-methylsulfanyl-L-aspartate(89)-[ribosomal protein uS12]-hydrogen + (sulfur carrier)-H + 5'-deoxyadenosine + L-methionine + A + S-adenosyl-L-homocysteine + 2 H(+). Catalyzes the methylthiolation of an aspartic acid residue of ribosomal protein uS12. The protein is Ribosomal protein uS12 methylthiotransferase RimO of Nitratidesulfovibrio vulgaris (strain DP4) (Desulfovibrio vulgaris).